We begin with the raw amino-acid sequence, 384 residues long: Mannitol-1-phosphate 5-dehydrogenase (384 aa).

Residue 4–15 coordinates NAD(+); sequence AVHFGAGNIGRG.

Belongs to the mannitol dehydrogenase family.

The enzyme catalyses D-mannitol 1-phosphate + NAD(+) = beta-D-fructose 6-phosphate + NADH + H(+). In Lacticaseibacillus paracasei (strain ATCC 334 / BCRC 17002 / CCUG 31169 / CIP 107868 / KCTC 3260 / NRRL B-441) (Lactobacillus paracasei), this protein is Mannitol-1-phosphate 5-dehydrogenase.